The following is a 440-amino-acid chain: MRALFLLALGSIPALVSGQLSGSVGPLTSASTKGATKTCNILSYGAVADNSTDVGPAITSAWAACKSGGLVYIPSGNYALNTWVTLTGGSATAIQLDGIIYRTGTASGNMIAVTDTTDFELFSSTSKGAVQGFGYVYHAEGTYGARILRLTDVTHFSVHDVILVDAPAFHFTMDTCSDGEVYNMAIRGGNEGGLDGIDVWGSNIWVHDVEVTNKDECVTVKSPANNILVESIYCNWSGGCAMGSLGADTDVTDIVYRNVYTWSSNQMYMIKSNGGSGTVSNVLLENFIGHGNAYSLDIDGYWSSMTAVAGDGVQLNNITVKNWKGTEANGATRPPIRVVCSDTAPCTDLTLEDIAIWTESGSSELYLCRSAYGSGYCLKDSSSHTSYTTTSTVTAAPSGYSATTMAADLATAFGLTASIPIPTIPTSFYPGLTPYSALAG.

The first 18 residues, 1 to 18 (MRALFLLALGSIPALVSG), serve as a signal peptide directing secretion. A disulfide bridge links cysteine 39 with cysteine 65. Residue asparagine 50 is glycosylated (N-linked (GlcNAc...) asparagine). The active-site Proton donor is the aspartate 215. An intrachain disulfide couples cysteine 217 to cysteine 234. Residue histidine 290 is part of the active site. N-linked (GlcNAc...) asparagine glycosylation occurs at asparagine 317. Intrachain disulfides connect cysteine 340–cysteine 346 and cysteine 368–cysteine 377. A glycan (O-linked (Man) threonine) is linked at threonine 385. Residue serine 386 is glycosylated (O-linked (Man) serine). Residues threonine 388, threonine 389, and threonine 390 are each glycosylated (O-linked (Man) threonine). An O-linked (Man) serine glycan is attached at serine 391. O-linked (Man) threonine glycosylation is found at threonine 392 and threonine 394. 2 O-linked (Man) serine glycosylation sites follow: serine 398 and serine 401. Threonine 403, threonine 404, and threonine 416 each carry an O-linked (Man) threonine glycan. A glycan (O-linked (Man) serine) is linked at serine 418. Residues threonine 423 and threonine 426 are each glycosylated (O-linked (Man) threonine). Serine 427 and serine 436 each carry an O-linked (Man) serine glycan.

It belongs to the glycosyl hydrolase 28 family. Post-translationally, the N-terminus is blocked. In terms of processing, N-glycosylated and may also be O-glycosylated.

It localises to the secreted. It carries out the reaction Endohydrolysis of alpha-D-GalA-(1-&gt;2)-alpha-L-Rha glycosidic bond in the rhamnogalacturonan I backbone with initial inversion of anomeric configuration releasing oligosaccharides with beta-D-GalA at the reducing end.. Pectinolytic enzymes consist of four classes of enzymes: pectine lyase, polygalacturonase, pectin methylesterase and rhamnogalacturonase. Has a positive effect in the apple hot-mash liquefaction process. Hydrolyzes alpha-D-galacturonopyranosyl-(1,2)-alpha-L-rhamnopyranosyl linkages in the backbone of the hairy regions of pectins. In Aspergillus aculeatus, this protein is Rhamnogalacturonase A (rhgA).